Consider the following 137-residue polypeptide: Phosphoribosyl-AMP cyclohydrolase (137 aa).

Asp-84 lines the Mg(2+) pocket. Cys-85 lines the Zn(2+) pocket. Positions 86 and 88 each coordinate Mg(2+). The Zn(2+) site is built by Cys-101 and Cys-108.

Belongs to the PRA-CH family. As to quaternary structure, homodimer. The cofactor is Mg(2+). It depends on Zn(2+) as a cofactor.

It is found in the cytoplasm. It catalyses the reaction 1-(5-phospho-beta-D-ribosyl)-5'-AMP + H2O = 1-(5-phospho-beta-D-ribosyl)-5-[(5-phospho-beta-D-ribosylamino)methylideneamino]imidazole-4-carboxamide. Its pathway is amino-acid biosynthesis; L-histidine biosynthesis; L-histidine from 5-phospho-alpha-D-ribose 1-diphosphate: step 3/9. Its function is as follows. Catalyzes the hydrolysis of the adenine ring of phosphoribosyl-AMP. This is Phosphoribosyl-AMP cyclohydrolase from Chlorobium phaeovibrioides (strain DSM 265 / 1930) (Prosthecochloris vibrioformis (strain DSM 265)).